Reading from the N-terminus, the 315-residue chain is Hydrogenase-4 component C (315 aa).

At 1–10 the chain is on the periplasmic side; that stretch reads MRQTLCDGYL. Residues 11–31 traverse the membrane as a helical segment; the sequence is VIFALAQAVILLMLTPLFTGI. Residues 32-73 are Cytoplasmic-facing; it reads SRQIRARMHSRRGPGIWQDYRDIHKLFKRQEVAPTSSGLMFR. The chain crosses the membrane as a helical span at residues 74 to 94; sequence LMPWVLISSMLVLAMALPLFI. At 95 to 98 the chain is on the periplasmic side; that stretch reads TVSP. A helical membrane pass occupies residues 99–119; it reads FAGGGDLITLIYLLALFRFFF. Residues 120–140 lie on the Cytoplasmic side of the membrane; the sequence is ALSGLDTGSPFAGVGASRELT. Residues 141-161 form a helical membrane-spanning segment; that stretch reads LGILVEPMLILSLLVLALIAG. At 162-181 the chain is on the periplasmic side; it reads STHIEMISNTLAMGWNSPLT. A helical membrane pass occupies residues 182-202; sequence TVLALLACGFACFIEMGKIPF. Residues 203-228 lie on the Cytoplasmic side of the membrane; sequence DVAEAEQELQEGPLTEYSGAGLALAK. The chain crosses the membrane as a helical span at residues 229 to 249; that stretch reads WGLGLKQVVMASLFVALFLPF. Residues 250–256 are Periplasmic-facing; sequence GRAQELS. The chain crosses the membrane as a helical span at residues 257-277; sequence LACLLTSLVVTLLKVLLIFVL. Residues 278–289 are Cytoplasmic-facing; it reads ASIAENTLARGR. Residues 290-310 form a helical membrane-spanning segment; that stretch reads FLLIHHVTWLGFSLAALAWVF. Over 311–315 the chain is Periplasmic; the sequence is WLTGL.

Belongs to the complex I subunit 1 family.

The protein resides in the cell inner membrane. Its function is as follows. Possible component of hydrogenase 4. The protein is Hydrogenase-4 component C of Escherichia coli (strain K12).